The primary structure comprises 444 residues: Deoxyguanosinetriphosphate triphosphohydrolase-like protein (444 aa).

Residues 66–259 (RLTHSLEAAQ…MELADDIAYG (194 aa)) form the HD domain.

Belongs to the dGTPase family. Type 2 subfamily.

This chain is Deoxyguanosinetriphosphate triphosphohydrolase-like protein, found in Vibrio campbellii (strain ATCC BAA-1116).